The following is an 81-amino-acid chain: Cytotoxin (81 aa).

Residues 1 to 21 (MKTLLLTTVVVTIVCLDLEYT) form the signal peptide. 4 disulfide bridges follow: Cys-24/Cys-42, Cys-35/Cys-59, Cys-63/Cys-74, and Cys-75/Cys-80.

Belongs to the three-finger toxin family. Short-chain subfamily. Type IA cytotoxin sub-subfamily. As to quaternary structure, monomer in solution; Homodimer and oligomer in the presence of negatively charged lipids forming a pore with a size ranging between 20 and 30 Angstroms. As to expression, expressed by the venom gland.

It is found in the secreted. The protein resides in the target cell membrane. In terms of biological role, shows cytolytic activity on many different cells by forming pore in lipid membranes. In vivo, increases heart rate or kills the animal by cardiac arrest. In addition, it binds to heparin with high affinity, interacts with Kv channel-interacting protein 1 (KCNIP1) in a calcium-independent manner, and binds to integrin alpha-V/beta-3 (ITGAV/ITGB3) with moderate affinity. This chain is Cytotoxin, found in Naja sputatrix (Malayan spitting cobra).